The following is a 419-amino-acid chain: UDP-N-acetylglucosamine 1-carboxyvinyltransferase (419 aa).

Residue 22 to 23 participates in phosphoenolpyruvate binding; the sequence is KN. Arginine 91 is a UDP-N-acetyl-alpha-D-glucosamine binding site. The Proton donor role is filled by cysteine 115. Cysteine 115 carries the post-translational modification 2-(S-cysteinyl)pyruvic acid O-phosphothioketal. UDP-N-acetyl-alpha-D-glucosamine-binding positions include 120–124, 160–163, aspartate 305, and isoleucine 327; these read RPVDL and KVSV.

This sequence belongs to the EPSP synthase family. MurA subfamily.

Its subcellular location is the cytoplasm. It carries out the reaction phosphoenolpyruvate + UDP-N-acetyl-alpha-D-glucosamine = UDP-N-acetyl-3-O-(1-carboxyvinyl)-alpha-D-glucosamine + phosphate. It functions in the pathway cell wall biogenesis; peptidoglycan biosynthesis. In terms of biological role, cell wall formation. Adds enolpyruvyl to UDP-N-acetylglucosamine. This is UDP-N-acetylglucosamine 1-carboxyvinyltransferase from Cronobacter sakazakii (strain ATCC BAA-894) (Enterobacter sakazakii).